A 149-amino-acid chain; its full sequence is Glutamyl-tRNA(Gln) amidotransferase subunit C, mitochondrial (149 aa).

The transit peptide at 1–25 (MNHLHRLFRITQVDRPVLLAITRRL) directs the protein to the mitochondrion.

This sequence belongs to the GatC family. As to quaternary structure, subunit of the heterotrimeric GatCAB amidotransferase (AdT) complex, composed of A, B and C subunits.

It is found in the mitochondrion. The catalysed reaction is L-glutamyl-tRNA(Gln) + L-glutamine + ATP + H2O = L-glutaminyl-tRNA(Gln) + L-glutamate + ADP + phosphate + H(+). Its function is as follows. Allows the formation of correctly charged Gln-tRNA(Gln) through the transamidation of misacylated Glu-tRNA(Gln) in the mitochondria. The reaction takes place in the presence of glutamine and ATP through an activated gamma-phospho-Glu-tRNA(Gln). This Branchiostoma floridae (Florida lancelet) protein is Glutamyl-tRNA(Gln) amidotransferase subunit C, mitochondrial.